The sequence spans 310 residues: Aspartate carbamoyltransferase catalytic subunit (310 aa).

2 residues coordinate carbamoyl phosphate: Arg58 and Thr59. Lys86 lines the L-aspartate pocket. Residues Arg108, His136, and Gln139 each coordinate carbamoyl phosphate. Residues Arg169 and Arg222 each coordinate L-aspartate. Carbamoyl phosphate is bound by residues Gly264 and Pro265.

The protein belongs to the aspartate/ornithine carbamoyltransferase superfamily. ATCase family. In terms of assembly, heterododecamer (2C3:3R2) of six catalytic PyrB chains organized as two trimers (C3), and six regulatory PyrI chains organized as three dimers (R2).

It carries out the reaction carbamoyl phosphate + L-aspartate = N-carbamoyl-L-aspartate + phosphate + H(+). The protein operates within pyrimidine metabolism; UMP biosynthesis via de novo pathway; (S)-dihydroorotate from bicarbonate: step 2/3. Functionally, catalyzes the condensation of carbamoyl phosphate and aspartate to form carbamoyl aspartate and inorganic phosphate, the committed step in the de novo pyrimidine nucleotide biosynthesis pathway. The chain is Aspartate carbamoyltransferase catalytic subunit from Campylobacter fetus subsp. fetus (strain 82-40).